The following is a 148-amino-acid chain: Deoxyuridine 5'-triphosphate nucleotidohydrolase (148 aa).

Substrate contacts are provided by residues 67–69 (RSG), N80, 84–86 (TID), and K94.

Belongs to the dUTPase family. The cofactor is Mg(2+).

The catalysed reaction is dUTP + H2O = dUMP + diphosphate + H(+). Its pathway is pyrimidine metabolism; dUMP biosynthesis; dUMP from dCTP (dUTP route): step 2/2. Functionally, this enzyme is involved in nucleotide metabolism: it produces dUMP, the immediate precursor of thymidine nucleotides and it decreases the intracellular concentration of dUTP so that uracil cannot be incorporated into DNA. This chain is Deoxyuridine 5'-triphosphate nucleotidohydrolase, found in Orientia tsutsugamushi (strain Boryong) (Rickettsia tsutsugamushi).